We begin with the raw amino-acid sequence, 503 residues long: Cytochrome c-552 (503 aa).

The N-terminal stretch at Met-1–Ala-16 is a signal peptide. His-102 lines the heme c pocket. 3 residues coordinate heme: Cys-130, Cys-133, and Lys-134. The heme c site is built by Cys-168, Cys-171, His-172, Cys-210, Cys-213, and His-214. 4 residues coordinate Ca(2+): Glu-216, Tyr-217, Lys-273, and Gln-275. Tyr-217 is a substrate binding site. A substrate-binding site is contributed by His-276. Residues His-287, Cys-294, Cys-297, His-298, His-312, Cys-325, Cys-328, His-329, and His-404 each contribute to the heme c site.

The protein belongs to the cytochrome c-552 family. Requires Ca(2+) as cofactor. It depends on heme c as a cofactor.

Its subcellular location is the periplasm. It carries out the reaction 6 Fe(III)-[cytochrome c] + NH4(+) + 2 H2O = 6 Fe(II)-[cytochrome c] + nitrite + 8 H(+). Its pathway is nitrogen metabolism; nitrate reduction (assimilation). Functionally, catalyzes the reduction of nitrite to ammonia, consuming six electrons in the process. The protein is Cytochrome c-552 of Maridesulfovibrio salexigens (strain ATCC 14822 / DSM 2638 / NCIMB 8403 / VKM B-1763) (Desulfovibrio salexigens).